Consider the following 603-residue polypeptide: UvrABC system protein C (603 aa).

Residues 15–92 form the GIY-YIG domain; that stretch reads DQPGCYLMKD…IKKHDPRFNI (78 aa). The region spanning 197 to 232 is the UVR domain; that stretch reads KTVKNDLMKKMQEAAENMEFEKAGEFRDQINAIETT.

This sequence belongs to the UvrC family. In terms of assembly, interacts with UvrB in an incision complex.

Its subcellular location is the cytoplasm. Functionally, the UvrABC repair system catalyzes the recognition and processing of DNA lesions. UvrC both incises the 5' and 3' sides of the lesion. The N-terminal half is responsible for the 3' incision and the C-terminal half is responsible for the 5' incision. This Listeria monocytogenes serotype 4a (strain HCC23) protein is UvrABC system protein C.